We begin with the raw amino-acid sequence, 105 residues long: Large ribosomal subunit protein uL24 (105 aa).

The protein belongs to the universal ribosomal protein uL24 family. Part of the 50S ribosomal subunit.

In terms of biological role, one of two assembly initiator proteins, it binds directly to the 5'-end of the 23S rRNA, where it nucleates assembly of the 50S subunit. Functionally, one of the proteins that surrounds the polypeptide exit tunnel on the outside of the subunit. This chain is Large ribosomal subunit protein uL24, found in Saccharophagus degradans (strain 2-40 / ATCC 43961 / DSM 17024).